The sequence spans 534 residues: ATP synthase subunit alpha 2 (534 aa).

175-182 contributes to the ATP binding site; it reads GDRQTGKT. A disordered region spans residues 506–534; that stretch reads FQPAPEPETAPKTKTDIKPKPKAAGGESS. Residues 514–524 are compositionally biased toward basic and acidic residues; the sequence is TAPKTKTDIKP.

The protein belongs to the ATPase alpha/beta chains family. As to quaternary structure, F-type ATPases have 2 components, CF(1) - the catalytic core - and CF(0) - the membrane proton channel. CF(1) has five subunits: alpha(3), beta(3), gamma(1), delta(1), epsilon(1). CF(0) has three main subunits: a(1), b(2) and c(9-12). The alpha and beta chains form an alternating ring which encloses part of the gamma chain. CF(1) is attached to CF(0) by a central stalk formed by the gamma and epsilon chains, while a peripheral stalk is formed by the delta and b chains.

It localises to the cell inner membrane. It catalyses the reaction ATP + H2O + 4 H(+)(in) = ADP + phosphate + 5 H(+)(out). In terms of biological role, produces ATP from ADP in the presence of a proton gradient across the membrane. The alpha chain is a regulatory subunit. The sequence is that of ATP synthase subunit alpha 2 from Albidiferax ferrireducens (strain ATCC BAA-621 / DSM 15236 / T118) (Rhodoferax ferrireducens).